We begin with the raw amino-acid sequence, 428 residues long: Lupus La protein homolog A (428 aa).

Positions 7–99 (KEQKLDSDTK…RRSPAKPLPE (93 aa)) constitute an HTH La-type RNA-binding domain. One can recognise an RRM domain in the interval 111–203 (KSVYIKGFPT…EERKLNKSEE (93 aa)). 2 disordered regions span residues 187–223 (EYHAKKNEERKLNKSEEKAKSKQVKKEAQKQAEDAER) and 323–428 (QESF…VGDQ). Short sequence motifs (nuclear localization signal) lie at residues 196–212 (RKLNKSEEKAKSKQVKK) and 316–332 (KKILEGKQESFNKRKGR). The xRRM domain maps to 227-349 (EERVGSLLKF…KGRGGKGNDS (123 aa)). 2 stretches are compositionally biased toward basic residues: residues 328–343 (KRKGRDGRKFKGKGRG) and 352–361 (RKRTQFQGKK). A compositionally biased stretch (acidic residues) spans 366–377 (SSDDEDDMEESE). The span at 406 to 428 (RSLDDKAEDGPAVKQSKTEVGDQ) shows a compositional bias: basic and acidic residues.

Post-translationally, phosphorylated.

It is found in the nucleus. Functionally, la protein plays a role in the transcription of RNA polymerase III. It is most probably a transcription termination factor. Binds to the 3' termini of virtually all nascent polymerase III transcripts. The polypeptide is Lupus La protein homolog A (ssb-a) (Xenopus laevis (African clawed frog)).